The sequence spans 260 residues: Global transcriptional regulator CodY (260 aa).

Residues 1-159 (MPNLLEKTRK…SSTVVGIQLL (159 aa)) form a GAF domain region. Residues 207-226 (ASVIADRIGITRSVIVNALR) constitute a DNA-binding region (H-T-H motif).

The protein belongs to the CodY family.

It is found in the cytoplasm. Functionally, DNA-binding global transcriptional regulator which is involved in the adaptive response to starvation and acts by directly or indirectly controlling the expression of numerous genes in response to nutrient availability. During rapid exponential growth, CodY is highly active and represses genes whose products allow adaptation to nutrient depletion. In Streptococcus equi subsp. equi (strain 4047), this protein is Global transcriptional regulator CodY.